We begin with the raw amino-acid sequence, 319 residues long: Protoheme IX farnesyltransferase (319 aa).

Transmembrane regions (helical) follow at residues 34 to 54, 55 to 75, 95 to 115, 119 to 139, 155 to 175, 182 to 202, 221 to 241, 244 to 264, and 291 to 311; these read VMSL…GHIN, PVLG…SGAL, IPAG…LSGF, ILGL…IFFY, IVIG…CVTG, VVLF…LALF, VPTT…IGVV, FMGF…VIFV, and IFYL…AVLM.

This sequence belongs to the UbiA prenyltransferase family. Protoheme IX farnesyltransferase subfamily.

It is found in the cell inner membrane. It catalyses the reaction heme b + (2E,6E)-farnesyl diphosphate + H2O = Fe(II)-heme o + diphosphate. Its pathway is porphyrin-containing compound metabolism; heme O biosynthesis; heme O from protoheme: step 1/1. Functionally, converts heme B (protoheme IX) to heme O by substitution of the vinyl group on carbon 2 of heme B porphyrin ring with a hydroxyethyl farnesyl side group. This is Protoheme IX farnesyltransferase from Rhizobium rhizogenes (strain K84 / ATCC BAA-868) (Agrobacterium radiobacter).